The sequence spans 109 residues: Large ribosomal subunit protein uL22 (109 aa).

This sequence belongs to the universal ribosomal protein uL22 family. In terms of assembly, part of the 50S ribosomal subunit.

This protein binds specifically to 23S rRNA; its binding is stimulated by other ribosomal proteins, e.g. L4, L17, and L20. It is important during the early stages of 50S assembly. It makes multiple contacts with different domains of the 23S rRNA in the assembled 50S subunit and ribosome. Its function is as follows. The globular domain of the protein is located near the polypeptide exit tunnel on the outside of the subunit, while an extended beta-hairpin is found that lines the wall of the exit tunnel in the center of the 70S ribosome. This chain is Large ribosomal subunit protein uL22, found in Methylibium petroleiphilum (strain ATCC BAA-1232 / LMG 22953 / PM1).